The primary structure comprises 662 residues: Polyunsaturated fatty acid (12S)/(13S)-lipoxygenase, epidermal-type (662 aa).

The 113-residue stretch at 2-114 (VKYKILVATG…TICLTEGTAL (113 aa)) folds into the PLAT domain. Positions 115-662 (KVTDDTQNLF…PSLVENSVTI (548 aa)) constitute a Lipoxygenase domain. Positions 360, 365, 540, and 662 each coordinate Fe cation.

It belongs to the lipoxygenase family. It depends on Fe cation as a cofactor. In terms of tissue distribution, expressed in epidermis.

The protein resides in the cytoplasm. It carries out the reaction (5Z,8Z,11Z,14Z)-eicosatetraenoate + O2 = (12S)-hydroperoxy-(5Z,8Z,10E,14Z)-eicosatetraenoate. It catalyses the reaction 1-O-methyl-(9Z,12Z)-octadecadienoate + O2 = 1-O-methyl-(13S)-hydroperoxy-(9Z,11E)-octadecadienoate. The catalysed reaction is (8Z,11Z,14Z)-eicosatrienoate + O2 = (12S)-hydroperoxy-(8Z,10E,14Z)-eicosatrienoate. The enzyme catalyses (5Z,8Z,11Z)-eicosatrienoate + O2 = (12S)-hydroperoxy-(5Z,8Z,10E)-eicosatrienoate. It carries out the reaction 1-O-methyl-(5Z,8Z,11Z,14Z)-eicosatetraenoate + O2 = 1-O-methyl-(12S)-hydroperoxy-(5Z,8Z,10E,14Z)-eicosatetraenoate. It catalyses the reaction (9Z,12Z)-octadecadienoate + O2 = (13S)-hydroperoxy-(9Z,11E)-octadecadienoate. The catalysed reaction is (4Z,7Z,10Z,13Z,16Z,19Z)-docosahexaenoate + O2 = (14S)-hydroperoxy-(4Z,7Z,10Z,12E,16Z,19Z)-docosahexaenoate. Its pathway is lipid metabolism; hydroperoxy eicosatetraenoic acid biosynthesis. Arachidonate 12-lipoxygenase activity is decreased when the pH decreases from 7.4 to 6.0. Functionally, catalyzes the regio and stereo-specific incorporation of a single molecule of dioxygen into free and esterified polyunsaturated fatty acids generating lipid hydroperoxides that can be further reduced to the corresponding hydroxy species. Shows increasing catalytic activity within the series arachidonic acid &lt; 5,8,11-eicosatrienoic acid &lt; linoleic acid &lt; 8,11,14-eicosatrienoic acid. The chain is Polyunsaturated fatty acid (12S)/(13S)-lipoxygenase, epidermal-type from Mus musculus (Mouse).